Here is a 311-residue protein sequence, read N- to C-terminus: Olfactory receptor 6B1 (311 aa).

Residues 1–25 are Extracellular-facing; sequence MELENQTRVTKFILVGFPGSLSMRA. N-linked (GlcNAc...) asparagine glycosylation is present at Asn-5. Residues 26–46 traverse the membrane as a helical segment; sequence AMFLIFLVAYILTVAENVIII. Residues 47-54 are Cytoplasmic-facing; it reads LLVLQNRP. The chain crosses the membrane as a helical span at residues 55–75; sequence LHKPMYFFLANLSFLETWYIS. Residues 76–99 are Extracellular-facing; sequence VTVPKLLFSFWSVNNSISFTLCMI. A disulfide bond links Cys-97 and Cys-189. The helical transmembrane segment at 100–120 threads the bilayer; it reads QLYFFIALMCTECVLLAAMAY. Residues 121–139 lie on the Cytoplasmic side of the membrane; sequence DRYVAICRPLHYPTIMSHG. Residues 140–160 traverse the membrane as a helical segment; that stretch reads LCFRLALGSWAIGFGISLAKI. The Extracellular segment spans residues 161 to 196; sequence YFISCLSFCGPNVINHFFCDISPVLNLSCTDMSITE. Residues 197–217 traverse the membrane as a helical segment; the sequence is LVDFILALVIFLFPLFITVLS. The Cytoplasmic portion of the chain corresponds to 218–235; sequence YGCILATILCMPTGKQKA. A helical membrane pass occupies residues 236–256; it reads FSTCASHLVVVTIFYSAIIFM. Residues 257–269 lie on the Extracellular side of the membrane; the sequence is YARPRVIHAFNMN. The chain crosses the membrane as a helical span at residues 270-290; that stretch reads KIISIFYAIVTPSLNPFIYCL. Residues 291 to 311 lie on the Cytoplasmic side of the membrane; it reads RNREVKEALKKLAYCQASRSD.

It belongs to the G-protein coupled receptor 1 family.

It is found in the cell membrane. Functionally, odorant receptor. The protein is Olfactory receptor 6B1 (OR6B1) of Homo sapiens (Human).